Here is a 433-residue protein sequence, read N- to C-terminus: C2H2 type master regulator of conidiophore development brlA (433 aa).

Disordered stretches follow at residues 24-49, 240-269, and 286-306; these read SDCPSMTSSFSPLDSPTPTPTSLYSQ, KSHTPSTPHRSVSMGTPSGSDTPVSRISGH, and MMQRHRQPSRKPSKKQLLRSN. The span at 30–49 shows a compositional bias: low complexity; the sequence is TSSFSPLDSPTPTPTSLYSQ. Residues 240-264 are compositionally biased toward polar residues; the sequence is KSHTPSTPHRSVSMGTPSGSDTPVS. A compositionally biased stretch (basic residues) spans 288–302; sequence QRHRQPSRKPSKKQL. 2 C2H2-type zinc fingers span residues 321-345 and 351-376; these read FKCKEPGCKGRFKRQEHLKRHMKSH and HVCWVPGCHRAFSRSDNLNAHYTKTH. Residues 391–423 form a disordered region; sequence ETSQDFDPDFRGQLTPDGRPIYGSKLEDSMPDC.

Its subcellular location is the nucleus. Functionally, brlA, abaA and wetA are pivotal regulators of conidiophore development and conidium maturation. They act individually and together to regulate their own expression and that of numerous other sporulation-specific genes. Binds promoters of target genes at brlA response elements (BREs) containing the conserved sequence 5'-(C/A)(A/G)AGGG(G/A)-3'. Regulates genes involved in conidiogenesis. This chain is C2H2 type master regulator of conidiophore development brlA, found in Penicillium digitatum (strain PHI26 / CECT 20796) (Green mold).